The chain runs to 269 residues: Phosphate import ATP-binding protein PstB 2 (269 aa).

Residues Leu-22–Val-264 enclose the ABC transporter domain. Residue Gly-55–Ser-62 participates in ATP binding.

It belongs to the ABC transporter superfamily. Phosphate importer (TC 3.A.1.7) family. In terms of assembly, the complex is composed of two ATP-binding proteins (PstB), two transmembrane proteins (PstC and PstA) and a solute-binding protein (PstS).

It is found in the cell membrane. It catalyses the reaction phosphate(out) + ATP + H2O = ADP + 2 phosphate(in) + H(+). Functionally, part of the ABC transporter complex PstSACB involved in phosphate import. Responsible for energy coupling to the transport system. The sequence is that of Phosphate import ATP-binding protein PstB 2 from Lactococcus lactis subsp. lactis (strain IL1403) (Streptococcus lactis).